The chain runs to 216 residues: tRNA (guanine-N(7)-)-methyltransferase (216 aa).

S-adenosyl-L-methionine contacts are provided by Glu44, Glu69, Asn97, and Asp119. Residue Asp119 is part of the active site. Substrate-binding positions include Lys123, Asp155, and 192-195; that span reads TEYE.

This sequence belongs to the class I-like SAM-binding methyltransferase superfamily. TrmB family.

It carries out the reaction guanosine(46) in tRNA + S-adenosyl-L-methionine = N(7)-methylguanosine(46) in tRNA + S-adenosyl-L-homocysteine. The protein operates within tRNA modification; N(7)-methylguanine-tRNA biosynthesis. Functionally, catalyzes the formation of N(7)-methylguanine at position 46 (m7G46) in tRNA. The polypeptide is tRNA (guanine-N(7)-)-methyltransferase (Lysinibacillus sphaericus (strain C3-41)).